The following is a 115-amino-acid chain: Ribonuclease P protein component (115 aa).

Belongs to the RnpA family. In terms of assembly, consists of a catalytic RNA component (M1 or rnpB) and a protein subunit.

The enzyme catalyses Endonucleolytic cleavage of RNA, removing 5'-extranucleotides from tRNA precursor.. Its function is as follows. RNaseP catalyzes the removal of the 5'-leader sequence from pre-tRNA to produce the mature 5'-terminus. It can also cleave other RNA substrates such as 4.5S RNA. The protein component plays an auxiliary but essential role in vivo by binding to the 5'-leader sequence and broadening the substrate specificity of the ribozyme. In Bacillus cereus (strain G9842), this protein is Ribonuclease P protein component.